Consider the following 299-residue polypeptide: Bifunctional protein FolD (299 aa).

NADP(+) is bound by residues Gly-168–Ser-170, Ser-193, and Ile-234.

Belongs to the tetrahydrofolate dehydrogenase/cyclohydrolase family. Homodimer.

The enzyme catalyses (6R)-5,10-methylene-5,6,7,8-tetrahydrofolate + NADP(+) = (6R)-5,10-methenyltetrahydrofolate + NADPH. It catalyses the reaction (6R)-5,10-methenyltetrahydrofolate + H2O = (6R)-10-formyltetrahydrofolate + H(+). It functions in the pathway one-carbon metabolism; tetrahydrofolate interconversion. Functionally, catalyzes the oxidation of 5,10-methylenetetrahydrofolate to 5,10-methenyltetrahydrofolate and then the hydrolysis of 5,10-methenyltetrahydrofolate to 10-formyltetrahydrofolate. This Bartonella quintana (strain Toulouse) (Rochalimaea quintana) protein is Bifunctional protein FolD.